Reading from the N-terminus, the 131-residue chain is Putative gamma-taxilin 2 (131 aa).

Belongs to the taxilin family. As to expression, ubiquitously expressed.

In Homo sapiens (Human), this protein is Putative gamma-taxilin 2 (TXLNGY).